The following is a 261-amino-acid chain: NAD kinase (261 aa).

Aspartate 54 serves as the catalytic Proton acceptor. Residues 54-55, 123-124, arginine 150, aspartate 152, and 163-168 contribute to the NAD(+) site; these read DG, ND, and TAYSLS.

The protein belongs to the NAD kinase family. The cofactor is a divalent metal cation.

The protein localises to the cytoplasm. The catalysed reaction is NAD(+) + ATP = ADP + NADP(+) + H(+). Involved in the regulation of the intracellular balance of NAD and NADP, and is a key enzyme in the biosynthesis of NADP. Catalyzes specifically the phosphorylation on 2'-hydroxyl of the adenosine moiety of NAD to yield NADP. This Caldicellulosiruptor bescii (strain ATCC BAA-1888 / DSM 6725 / KCTC 15123 / Z-1320) (Anaerocellum thermophilum) protein is NAD kinase.